The primary structure comprises 298 residues: Mimecan (298 aa).

The first 19 residues, 1-19 (METVHSTFLLLLFVPLTQQ), serve as a signal peptide directing secretion. A glycan (N-linked (GlcNAc...) (keratan sulfate) asparagine) is linked at N88. LRR repeat units lie at residues 112-131 (DAVPPLPKESAYLYARFNKI), 132-155 (KKLTAKDFADMPNLRRLDFTGNLI), 156-179 (EDIEDGTFSKLSLLEELTLAENQL), 180-199 (LRLPVLPPKLTLLNAKHNKI), 200-225 (KSKGIKANTFKKLNKLSFLYLDHNDL), 226-246 (ESVPPNLPESLRVIHLQFNSI), and 247-277 (SSLTDDTFCKANDTRYIRERIEEIRLEGNPI). Cysteines 255 and 288 form a disulfide. Residue N258 is glycosylated (N-linked (GlcNAc...) (keratan sulfate) asparagine).

It belongs to the small leucine-rich proteoglycan (SLRP) family. SLRP class III subfamily. Post-translationally, contains keratan sulfate.

Its subcellular location is the secreted. It is found in the extracellular space. The protein resides in the extracellular matrix. Its function is as follows. Induces bone formation in conjunction with TGF-beta-1 or TGF-beta-2. The protein is Mimecan (Ogn) of Mus musculus (Mouse).